Reading from the N-terminus, the 400-residue chain is Argininosuccinate synthase (400 aa).

Position 9 to 17 (9 to 17 (AYSGGLDTS)) interacts with ATP. Residue Tyr-87 participates in L-citrulline binding. Gly-117 contributes to the ATP binding site. L-aspartate is bound by residues Thr-119, Asn-123, and Asp-124. Asn-123 is a binding site for L-citrulline. Arg-127, Ser-176, Ser-185, Glu-261, and Tyr-273 together coordinate L-citrulline.

Belongs to the argininosuccinate synthase family. Type 1 subfamily. In terms of assembly, homotetramer.

Its subcellular location is the cytoplasm. It catalyses the reaction L-citrulline + L-aspartate + ATP = 2-(N(omega)-L-arginino)succinate + AMP + diphosphate + H(+). Its pathway is amino-acid biosynthesis; L-arginine biosynthesis; L-arginine from L-ornithine and carbamoyl phosphate: step 2/3. This chain is Argininosuccinate synthase, found in Chlorobium limicola (strain DSM 245 / NBRC 103803 / 6330).